The chain runs to 181 residues: Probable inosine/xanthosine triphosphatase (181 aa).

A Mg(2+)-binding site is contributed by aspartate 65.

It belongs to the YjjX NTPase family. As to quaternary structure, homodimer. Requires Mg(2+) as cofactor. Mn(2+) serves as cofactor.

The catalysed reaction is XTP + H2O = XDP + phosphate + H(+). The enzyme catalyses ITP + H2O = IDP + phosphate + H(+). Functionally, phosphatase that hydrolyzes non-canonical purine nucleotides such as XTP and ITP to their respective diphosphate derivatives. Probably excludes non-canonical purines from DNA/RNA precursor pool, thus preventing their incorporation into DNA/RNA and avoiding chromosomal lesions. The chain is Probable inosine/xanthosine triphosphatase from Caldivirga maquilingensis (strain ATCC 700844 / DSM 13496 / JCM 10307 / IC-167).